The sequence spans 122 residues: Large ribosomal subunit protein uL14 (122 aa).

Belongs to the universal ribosomal protein uL14 family. As to quaternary structure, part of the 50S ribosomal subunit. Forms a cluster with proteins L3 and L19. In the 70S ribosome, L14 and L19 interact and together make contacts with the 16S rRNA in bridges B5 and B8.

In terms of biological role, binds to 23S rRNA. Forms part of two intersubunit bridges in the 70S ribosome. This is Large ribosomal subunit protein uL14 from Corynebacterium aurimucosum (strain ATCC 700975 / DSM 44827 / CIP 107346 / CN-1) (Corynebacterium nigricans).